The sequence spans 467 residues: ATP-dependent protease ATPase subunit HslU (467 aa).

Residues Val-20, 62–67, Asp-280, Glu-345, and Arg-417 contribute to the ATP site; that span reads GVGKTE.

Belongs to the ClpX chaperone family. HslU subfamily. As to quaternary structure, a double ring-shaped homohexamer of HslV is capped on each side by a ring-shaped HslU homohexamer. The assembly of the HslU/HslV complex is dependent on binding of ATP.

It is found in the cytoplasm. Its function is as follows. ATPase subunit of a proteasome-like degradation complex; this subunit has chaperone activity. The binding of ATP and its subsequent hydrolysis by HslU are essential for unfolding of protein substrates subsequently hydrolyzed by HslV. HslU recognizes the N-terminal part of its protein substrates and unfolds these before they are guided to HslV for hydrolysis. The sequence is that of ATP-dependent protease ATPase subunit HslU from Enterococcus faecalis (strain ATCC 700802 / V583).